Here is a 137-residue protein sequence, read N- to C-terminus: Urease subunit beta (137 aa).

A disordered region spans residues 113 to 137 (NGHPNAGVKNDEGKQNANKESGDNR).

The protein belongs to the urease beta subunit family. Heterotrimer of UreA (gamma), UreB (beta) and UreC (alpha) subunits. Three heterotrimers associate to form the active enzyme.

It is found in the cytoplasm. The enzyme catalyses urea + 2 H2O + H(+) = hydrogencarbonate + 2 NH4(+). The protein operates within nitrogen metabolism; urea degradation; CO(2) and NH(3) from urea (urease route): step 1/1. The protein is Urease subunit beta of Staphylococcus carnosus (strain TM300).